The chain runs to 295 residues: Protease HtpX (295 aa).

Helical transmembrane passes span 4–24 (ILLF…TLSL) and 42–62 (QLLI…LFIS). Residue His147 coordinates Zn(2+). The active site involves Glu148. His151 serves as a coordination point for Zn(2+). A run of 2 helical transmembrane segments spans residues 158-178 (VTLA…ARII) and 199-219 (VATI…VMWF). Glu224 contributes to the Zn(2+) binding site.

Belongs to the peptidase M48B family. Requires Zn(2+) as cofactor.

The protein resides in the cell inner membrane. In Pseudomonas fluorescens (strain ATCC BAA-477 / NRRL B-23932 / Pf-5), this protein is Protease HtpX.